The chain runs to 375 residues: Phosphoribulokinase, chloroplastic (375 aa).

A chloroplast-targeting transit peptide spans 1–31 (MAFTMRAPAPRATAQSRVTANRARRSLVVRA). The cysteines at positions 47 and 86 are disulfide-linked.

It belongs to the phosphoribulokinase family. Component of a complex that contains two dimers of PRK, two tetramers of GAPDH and CP12.

Its subcellular location is the plastid. It is found in the chloroplast. It carries out the reaction D-ribulose 5-phosphate + ATP = D-ribulose 1,5-bisphosphate + ADP + H(+). It participates in carbohydrate biosynthesis; Calvin cycle. With respect to regulation, light regulated via thioredoxin by reversible oxidation/reduction of sulfhydryl/disulfide groups. This chain is Phosphoribulokinase, chloroplastic (PRKA), found in Chlamydomonas reinhardtii (Chlamydomonas smithii).